Reading from the N-terminus, the 222-residue chain is 2-hydroxypent-2,4-dienoate hydratase (222 aa).

It belongs to the hydratase/decarboxylase family.

It participates in aromatic compound metabolism; benzoate degradation via hydroxylation. Its function is as follows. Conversion of 2-hydroxypent-2,4-dienoate into 4-hydroxy-2-oxopentanoate. This chain is 2-hydroxypent-2,4-dienoate hydratase (xylJ), found in Pseudomonas putida (Arthrobacter siderocapsulatus).